We begin with the raw amino-acid sequence, 375 residues long: Glutamate 5-kinase (375 aa).

ATP is bound at residue lysine 17. Residues serine 57, aspartate 144, and asparagine 156 each contribute to the substrate site. 176–177 contacts ATP; sequence TD. A PUA domain is found at 283–361; the sequence is KGELILDTGA…DEIEGILGYV (79 aa).

Belongs to the glutamate 5-kinase family.

The protein resides in the cytoplasm. The catalysed reaction is L-glutamate + ATP = L-glutamyl 5-phosphate + ADP. The protein operates within amino-acid biosynthesis; L-proline biosynthesis; L-glutamate 5-semialdehyde from L-glutamate: step 1/2. Functionally, catalyzes the transfer of a phosphate group to glutamate to form L-glutamate 5-phosphate. The chain is Glutamate 5-kinase from Thioalkalivibrio sulfidiphilus (strain HL-EbGR7).